The following is a 445-amino-acid chain: Histone acetyltransferase ESA1 (445 aa).

Ser-17 carries the post-translational modification Phosphoserine. The region spanning 22 to 74 (IIKCQCWVQKNDEERLAEILSINTRKAPPKFYVHYVNYNKRLDEWITTDRINL) is the Tudor-knot domain. The segment at 88 to 114 (EDNKKQKKKKATNTSETPQDSLQDGVD) is disordered. The segment covering 99–109 (TNTSETPQDSL) has biased composition (polar residues). Positions 162–433 (ARVRNLNRII…IDPNRLIWKP (272 aa)) constitute an MYST-type HAT domain. A C2HC MYST-type; degenerate zinc finger spans residues 195 to 220 (IYIDDFTLQYFGSKKQYERYRKKCTL). An ESA1-RPD3 motif motif is present at residues 245–266 (RTWCRNLCLLSKLFLDHKTLYY). N6-acetyllysine; by autocatalysis is present on Lys-262. Acetyl-CoA is bound by residues 303 to 307 (ACILT) and 312 to 318 (QRMGYGK). The active-site Proton donor/acceptor is the Glu-338. Residue Ser-342 coordinates acetyl-CoA.

The protein belongs to the MYST (SAS/MOZ) family. Component of the NuA4 histone acetyltransferase complex composed of at least ACT1, ARP4, EAF3, EAF5, EAF6, EAF7, EPL1, ESA1, SWC4, TRA1, VID21, YAF9 and YNG2. The complex interacts with histones H4 (HHF1 and HHF2), H3 (HHT1 and HHT2) and H2A (HTA1 and HTA2). In terms of processing, autoacetylation at Lys-262 is required for proper function.

It carries out the reaction L-lysyl-[histone] + acetyl-CoA = N(6)-acetyl-L-lysyl-[histone] + CoA + H(+). It catalyses the reaction L-lysyl-[protein] + acetyl-CoA = N(6)-acetyl-L-lysyl-[protein] + CoA + H(+). The catalysed reaction is 2-hydroxyisobutanoyl-CoA + L-lysyl-[protein] = N(6)-(2-hydroxyisobutanoyl)-L-lysyl-[protein] + CoA + H(+). The enzyme catalyses (2E)-butenoyl-CoA + L-lysyl-[protein] = N(6)-(2E)-butenoyl-L-lysyl-[protein] + CoA + H(+). Functionally, catalytic component of the NuA4 histone acetyltransferase (HAT), a multiprotein complex involved in epigenetic transcriptional activation of selected genes principally by acetylation of nucleosomal histones H4, H3, H2B, H2A and H2A variant H2A.Z. Acetylates histone H4 to form H4K5ac, H4K8ac, H4K12ac and H4K16ac, histone H3 to form H3K14ac, histone H2B to form H2BK16ac, histone H2A to form H2AK4ac and H2AK7ac, and histone variant H2A.Z to form H2A.ZK14ac. Acetylation of histones gives a specific tag for epigenetic transcription initiation and elongation. Acetylation of histone H4 is essential for DNA double-strand break repair through homologous recombination. Involved in cell cycle progression. Recruitment to promoters depends on H3K4me. Also acetylates non-histone proteins, such as ATG3 and PAH1. Regulates autophagy by acetylating ATG3, controlling interaction the interaction between ATG3 and ATG8 and ATG8 lipidation. Acts as a regulator of fatty-acid-induced triacylglycerol synthesis by catalyzing acetylation of PAH1, thereby promoting the synthesis of diacylglycerol. In addition to protein acetyltransferase, can use different acyl-CoA substrates, such as 2-hydroxyisobutanoyl-CoA (2-hydroxyisobutyryl-CoA) or (2E)-butenoyl-CoA (crotonyl-CoA), and is able to mediate protein 2-hydroxyisobutyrylation and crotonylation, respectively. Catalyzes histone crotonylation. This is Histone acetyltransferase ESA1 from Saccharomyces cerevisiae (strain ATCC 204508 / S288c) (Baker's yeast).